The sequence spans 367 residues: ELAV-like protein 3 (367 aa).

RRM domains are found at residues 39 to 117 (TNLI…YARP), 125 to 205 (ANLY…FANN), and 284 to 362 (WCIF…FKTS).

It belongs to the RRM elav family. In terms of assembly, interacts with MAP1B light chain LC1. As to expression, brain specific.

Functionally, RNA-binding protein that binds to AU-rich element (ARE) sequences of target mRNAs, including VEGF mRNA. May also bind poly-A tracts via RRM 3. May be involved in neuronal differentiation and maintenance. Plays a role in the stabilization of GAP43 mRNA and in spatial learning. This Homo sapiens (Human) protein is ELAV-like protein 3 (ELAVL3).